Consider the following 422-residue polypeptide: MIRLTQYLQSGVKPALGCTEPGAIAFAVSRACKDLPEDEILESIEVKTSINIYKNGMYVVIPGTNGARGNKIAAALGAICGDPSLKLRALKSCNDSHIEKAKRMIASGKVKLSCLRDKPGVYIDVTVKTRNHAARCVIDGDHTAISLVARDGVIVFKGSQREREEPVFFEGEKFPIDEIIETVERIDAKDVDFIFEGVKMNLEIATYAMNEGISLCKPVKENNNSEEELAIRIKRFCAAASFARMAGVPLPVMSSGGSGNQGIVTILPVAITGKSYGKTREEIAKAIALSHLVLGYIKSRLGKVTPTCGAANAAGPAAAAGIVYMLNGSTEQISQAMSTVFSSTLGMICDGAKEACAYKVGFSGEVAYNSAMLALDKSCVAGPQGVVGKTIEETIENIREISTRTALELENTIIDILEKYNK.

This sequence belongs to the UPF0597 family.

This is UPF0597 protein Kole_0595 from Kosmotoga olearia (strain ATCC BAA-1733 / DSM 21960 / TBF 19.5.1).